Here is a 95-residue protein sequence, read N- to C-terminus: Aspartyl/glutamyl-tRNA(Asn/Gln) amidotransferase subunit C (95 aa).

The protein belongs to the GatC family. In terms of assembly, heterotrimer of A, B and C subunits.

It catalyses the reaction L-glutamyl-tRNA(Gln) + L-glutamine + ATP + H2O = L-glutaminyl-tRNA(Gln) + L-glutamate + ADP + phosphate + H(+). The catalysed reaction is L-aspartyl-tRNA(Asn) + L-glutamine + ATP + H2O = L-asparaginyl-tRNA(Asn) + L-glutamate + ADP + phosphate + 2 H(+). In terms of biological role, allows the formation of correctly charged Asn-tRNA(Asn) or Gln-tRNA(Gln) through the transamidation of misacylated Asp-tRNA(Asn) or Glu-tRNA(Gln) in organisms which lack either or both of asparaginyl-tRNA or glutaminyl-tRNA synthetases. The reaction takes place in the presence of glutamine and ATP through an activated phospho-Asp-tRNA(Asn) or phospho-Glu-tRNA(Gln). This chain is Aspartyl/glutamyl-tRNA(Asn/Gln) amidotransferase subunit C, found in Dehalococcoides mccartyi (strain ATCC BAA-2266 / KCTC 15142 / 195) (Dehalococcoides ethenogenes (strain 195)).